A 47-amino-acid polypeptide reads, in one-letter code: MVAYPEISWTRNGCTVAKYPEISWTRNGCTVSKYPEISWTRNGCTVA.

The propeptide occupies Met-1–Ala-3. Cys-14 is lipidated: S-farnesyl cysteine. The propeptide occupies Thr-15 to Lys-18. Cys-29 carries S-farnesyl cysteine lipidation. Residues Thr-30–Lys-33 constitute a propeptide that is removed on maturation. Cys-44 carries the S-farnesyl cysteine lipid modification. Residues Thr-45–Ala-47 constitute a propeptide that is removed on maturation.

The protein resides in the cell membrane. Functionally, rhodotorucin-A is a mating pheromone in cells of mating type A of Rhodosporidium toruloides. This is Rhodotorucin-A peptides type 3 (RHA3) from Rhodotorula toruloides (Yeast).